We begin with the raw amino-acid sequence, 517 residues long: Ribonuclease Y (517 aa).

Residues 1–21 traverse the membrane as a helical segment; the sequence is MIEVLIGLGAGVAGVGAGYLY. A KH domain is found at 207 to 273; that stretch reads LINVVNIKND…TRVIELLVED (67 aa). In terms of domain architecture, HD spans 333–426; sequence ALAHSLEVAH…VCAADCLSAA (94 aa).

Belongs to the RNase Y family.

It is found in the cell membrane. In terms of biological role, endoribonuclease that initiates mRNA decay. The protein is Ribonuclease Y of Campylobacter curvus (strain 525.92).